A 700-amino-acid polypeptide reads, in one-letter code: Choline transporter-like protein 5-B (700 aa).

Topologically, residues 1-4 (GCTD) are cytoplasmic. Residues 5 to 25 (VLCCVIFVIVILGYIVLGTVA) form a helical membrane-spanning segment. Residues 26–209 (WMHGDPRKVV…KIFEDYASSW (184 aa)) are Extracellular-facing. N-linked (GlcNAc...) asparagine glycans are attached at residues Asn157 and Asn164. Residues 210-230 (FWILIGLVISMLVSLVFILLL) traverse the membrane as a helical segment. Topologically, residues 231 to 233 (RFT) are cytoplasmic. A helical transmembrane segment spans residues 234-254 (AGVLFWLVIFGVIAAVGYGIW). The Extracellular portion of the chain corresponds to 255–292 (HCYWEYSSLKGKPDSDVTISDIGFQTDFRVYLQLSQTW). Residues 293–313 (LIFMTSLAVIEAIIILVLIFL) form a helical membrane-spanning segment. Over 314-341 (RNRVRIAIALLKEGSKAIGCIMSTLFYP) the chain is Cytoplasmic. Residues 342–362 (IITFLLLALCIAYWAVTAVFL) form a helical membrane-spanning segment. Residues 363-432 (ASSGEAVYKV…LQLCNLLVFL (70 aa)) lie on the Extracellular side of the membrane. N-linked (GlcNAc...) asparagine glycans are attached at residues Asn383 and Asn395. The chain crosses the membrane as a helical span at residues 433–455 (WLVNFTIALGQCTLAGAFAAYYW). The Cytoplasmic portion of the chain corresponds to 456–482 (ALRKPADIPPCPLASSFGRALRYHTGS). The chain crosses the membrane as a helical span at residues 483 to 503 (LAFGALILSIVQFIRIILEYL). The Extracellular portion of the chain corresponds to 504-541 (DHKLKGAHNAFTRFLLCCLKCCFWCLEHFIKFMNRNAY). A helical membrane pass occupies residues 542 to 562 (IMISIYGKNFCTSARDAFFLL). The Cytoplasmic portion of the chain corresponds to 563 to 577 (MRNVMRVAVLDKVTD). A helical membrane pass occupies residues 578–598 (FLLFLGKLLISGSVGVLAFFF). Topologically, residues 599–616 (FTRQIPVIQEEVPSLNYY) are extracellular. The helical transmembrane segment at 617–637 (WVPLLTVIFGSYMIAHGFFNV) threads the bilayer. Over 638–687 (YAMCVDTLFLCFLLDLEKNDGSATRPYYMCSSLRAILNKKNQKRPKETKR) the chain is Cytoplasmic. The tract at residues 676–700 (KKNQKRPKETKRGRKQKKEQPKSRH) is disordered. The span at 677–692 (KNQKRPKETKRGRKQK) shows a compositional bias: basic residues.

The protein belongs to the CTL (choline transporter-like) family.

It localises to the cell membrane. It carries out the reaction choline(out) + n H(+)(in) = choline(in) + n H(+)(out). Its function is as follows. Choline/H+ antiporter. The chain is Choline transporter-like protein 5-B (slc44a5b) from Danio rerio (Zebrafish).